A 916-amino-acid polypeptide reads, in one-letter code: RNA-directed DNA polymerase from mobile element jockey (916 aa).

In terms of domain architecture, Reverse transcriptase spans 483 to 757 (SILRVGYFPK…HEYKYLGVIL (275 aa)). A disordered region spans residues 890 to 916 (RSASPRSRVRRRLKRHHPQDLLDRALT). Residues 896 to 906 (SRVRRRLKRHH) show a composition bias toward basic residues. Residues 907 to 916 (PQDLLDRALT) are compositionally biased toward basic and acidic residues.

Requires Mg(2+) as cofactor. Mn(2+) serves as cofactor.

The catalysed reaction is DNA(n) + a 2'-deoxyribonucleoside 5'-triphosphate = DNA(n+1) + diphosphate. Its activity is regulated as follows. Inactivated by sulphydryl reagent. This Drosophila funebris (Fruit fly) protein is RNA-directed DNA polymerase from mobile element jockey (jockey\pol).